The primary structure comprises 907 residues: Protein translocase subunit SecA (907 aa).

ATP contacts are provided by residues glutamine 87, 105 to 109 (GEGKT), and aspartate 510. Zn(2+)-binding residues include cysteine 892, cysteine 894, cysteine 903, and histidine 904.

It belongs to the SecA family. As to quaternary structure, monomer and homodimer. Part of the essential Sec protein translocation apparatus which comprises SecA, SecYEG and auxiliary proteins SecDF-YajC and YidC. It depends on Zn(2+) as a cofactor.

The protein resides in the cell inner membrane. It localises to the cytoplasm. The enzyme catalyses ATP + H2O + cellular proteinSide 1 = ADP + phosphate + cellular proteinSide 2.. Its function is as follows. Part of the Sec protein translocase complex. Interacts with the SecYEG preprotein conducting channel. Has a central role in coupling the hydrolysis of ATP to the transfer of proteins into and across the cell membrane, serving both as a receptor for the preprotein-SecB complex and as an ATP-driven molecular motor driving the stepwise translocation of polypeptide chains across the membrane. This chain is Protein translocase subunit SecA, found in Acinetobacter baumannii (strain AB0057).